We begin with the raw amino-acid sequence, 123 residues long: Small ribosomal subunit protein uS13 (123 aa).

This sequence belongs to the universal ribosomal protein uS13 family. Part of the 30S ribosomal subunit. Forms a loose heterodimer with protein S19. Forms two bridges to the 50S subunit in the 70S ribosome.

Its function is as follows. Located at the top of the head of the 30S subunit, it contacts several helices of the 16S rRNA. In the 70S ribosome it contacts the 23S rRNA (bridge B1a) and protein L5 of the 50S subunit (bridge B1b), connecting the 2 subunits; these bridges are implicated in subunit movement. Contacts the tRNAs in the A and P-sites. The protein is Small ribosomal subunit protein uS13 of Neorickettsia sennetsu (strain ATCC VR-367 / Miyayama) (Ehrlichia sennetsu).